The primary structure comprises 805 residues: G-type lectin S-receptor-like serine/threonine-protein kinase SD1-29 (805 aa).

Positions 1–21 (MGMVLFACLLLLIIFPTCGYA) are cleaved as a signal peptide. The region spanning 22-141 (AINTSSPLSI…VSGNKLWQSF (120 aa)) is the Bulb-type lectin domain. Residues 22–428 (AINTSSPLSI…SELAGSSRRK (407 aa)) lie on the Extracellular side of the membrane. N-linked (GlcNAc...) asparagine glycosylation is found at N24, N50, N85, N91, and N248. The region spanning 277-313 (PENPCDLYGRCGPYGLCVRSDPPKCECLKGFVPKSDE) is the EGF-like domain. Intrachain disulfides connect C281–C293 and C287–C301. N-linked (GlcNAc...) asparagine glycans are attached at residues N319 and N378. Positions 332 to 418 (CQAKSSMKTQ…GEFLFIRLAS (87 aa)) constitute a PAN domain. 2 cysteine pairs are disulfide-bonded: C371-C392 and C375-C381. A helical transmembrane segment spans residues 429 to 449 (IIVGTTVSLSIFLILVFAAIM). The Cytoplasmic segment spans residues 450 to 805 (LWRYRAKQND…EMTESMIQGR (356 aa)). The 286-residue stretch at 488 to 773 (FSPSNKLGQG…DLPVPKQPIF (286 aa)) folds into the Protein kinase domain. ATP is bound by residues 494–502 (LGQGGFGPV) and K516. 2 positions are modified to phosphoserine: S522 and S537. The interval 577–594 (CLKFELDWPKRFNIIQGI) is caM-binding. Y600 carries the phosphotyrosine modification. The active-site Proton acceptor is D613. S617 and S630 each carry phosphoserine. At T647 the chain carries Phosphothreonine. A phosphoserine mark is found at S690 and S793.

The protein belongs to the protein kinase superfamily. Ser/Thr protein kinase family. As to quaternary structure, interacts with PUB9, PUB13, PUB14, PUB29, PUB38, PUB44 and PUB45. Interacts with PBL34, PBL35 and PBL36. Post-translationally, autophosphorylated at Tyr-600. Autophosphorylation at Tyr-600 is required for downstream phosphorylation of the receptor-like cytoplasmic kinase PBL34, PBL35 and PBL36, and activation of plant immunity.

The protein localises to the cell membrane. The catalysed reaction is L-seryl-[protein] + ATP = O-phospho-L-seryl-[protein] + ADP + H(+). It catalyses the reaction L-threonyl-[protein] + ATP = O-phospho-L-threonyl-[protein] + ADP + H(+). The enzyme catalyses L-tyrosyl-[protein] + ATP = O-phospho-L-tyrosyl-[protein] + ADP + H(+). Its function is as follows. S-domain receptor protein kinase involved in lipopolysaccharide (LPS) sensing. Specifically detects LPS of Pseudomonas and Xanthomonas species. LPS are major components of the outer membrane of Gram-negative bacteria and are important microbe-associated molecular patterns (MAMPs) that trigger biphasic production of reactive oxygen species (ROS) and immune responses in plants. Seems to be only partially associated with the second LPS-triggered ROS burst. Mediates defense signaling in response to the medium-chain 3-hydroxy fatty acid 3-OH-C10:0, a pathogen-associated molecular pattern (PAMP) which induces autophosphorylation at Tyr-600. Autophosphorylation at Tyr-600 is required for downstream phosphorylation of the receptor-like cytoplasmic kinase PBL34, PBL35 and PBL36, and activation of plant immunity. Functionally, (Microbial infection) Targeted by the bacterial type III effector protein tyrosine phosphatase HopAO1 from Pseudomonas syringae. HopAO1 dephosphorylates Tyr-600, which suppresses the immune response. This chain is G-type lectin S-receptor-like serine/threonine-protein kinase SD1-29, found in Arabidopsis thaliana (Mouse-ear cress).